Reading from the N-terminus, the 459-residue chain is Minor capsid protein L2 (459 aa).

Residues 1–9 (MALKRRKRA) carry the Nuclear localization signal motif. Cys-18 and Cys-24 are disulfide-bonded. The Nuclear localization signal signature appears at 439–447 (FFPKRRKRV).

The protein belongs to the papillomaviridae L2 protein family. Interacts with major capsid protein L1. Interacts with E2; this interaction inhibits E2 transcriptional activity but not the DNA replication function E2. Interacts with host GADD45GIP1. Interacts with host HSPA8; this interaction is required for L2 nuclear translocation. Interacts with host importins KPNB2 and KPNB3. Forms a complex with importin alpha2-beta1 heterodimers via interaction with the importin alpha2 adapter. Interacts with host DYNLT1; this interaction is essential for virus intracellular transport during entry. Interacts (via C-terminus) with host retromer subunits VPS35 and VPS29. Post-translationally, highly phosphorylated.

It is found in the virion. Its subcellular location is the host nucleus. It localises to the host early endosome. The protein localises to the host Golgi apparatus. Its function is as follows. Minor protein of the capsid that localizes along the inner surface of the virion, within the central cavities beneath the L1 pentamers. Plays a role in capsid stabilization through interaction with the major capsid protein L1. Once the virion enters the host cell, L2 escorts the genomic DNA into the nucleus by promoting escape from the endosomal compartments and traffic through the host Golgi network. Mechanistically, the C-terminus of L2 possesses a cell-penetrating peptide that protudes from the host endosome, interacts with host cytoplasmic retromer cargo and thereby mediates the capsid delivery to the host trans-Golgi network. Plays a role through its interaction with host dynein in the intracellular microtubule-dependent transport of viral capsid toward the nucleus. Mediates the viral genome import into the nucleus through binding to host importins. Once within the nucleus, L2 localizes viral genomes to host PML bodies in order to activate early gene expression for establishment of infection. Later on, promotes late gene expression by interacting with the viral E2 protein and by inhibiting its transcriptional activation functions. During virion assembly, encapsidates the genome by direct interaction with the viral DNA. This Human papillomavirus type 61 protein is Minor capsid protein L2.